We begin with the raw amino-acid sequence, 347 residues long: 5-deoxyribose 1-phosphate isomerase (347 aa).

Substrate is bound by residues 48 to 50 (RGA), R91, and Q198. Residue D239 is the Proton donor of the active site. 249 to 250 (NK) serves as a coordination point for substrate.

It belongs to the EIF-2B alpha/beta/delta subunits family. DrdI subfamily.

It carries out the reaction 5-deoxy-alpha-D-ribose 1-phosphate = 5-deoxy-D-ribulose 1-phosphate. It functions in the pathway carbohydrate degradation. Functionally, catalyzes the isomerization of 5-deoxy-alpha-D-ribose 1-phosphate to 5-deoxy-D-ribulose 1-phosphate, as part of a 5-deoxyribose salvage pathway that recycles this toxic radical SAM enzyme by-product to mainstream metabolites. The chain is 5-deoxyribose 1-phosphate isomerase from Bacillus thuringiensis subsp. konkukian (strain 97-27).